The following is a 282-amino-acid chain: Probable endonuclease 4 (282 aa).

The Zn(2+) site is built by His-71, His-111, Glu-147, Asp-181, His-184, His-218, Asp-231, His-233, and Glu-263.

The protein belongs to the AP endonuclease 2 family. It depends on Zn(2+) as a cofactor.

It catalyses the reaction Endonucleolytic cleavage to 5'-phosphooligonucleotide end-products.. Functionally, endonuclease IV plays a role in DNA repair. It cleaves phosphodiester bonds at apurinic or apyrimidinic (AP) sites, generating a 3'-hydroxyl group and a 5'-terminal sugar phosphate. The chain is Probable endonuclease 4 from Protochlamydia amoebophila (strain UWE25).